A 1714-amino-acid chain; its full sequence is Collagen alpha-1(XXIV) chain (1714 aa).

Residues 1-35 form the signal peptide; the sequence is MHLRAHRTRRGKVSPTAKTKSLLHFIVLCVAGVVV. Residues 141 to 217 form the Laminin G-like domain; it reads KLVVHIRGKQ…MNNNSIHFEG (77 aa). 3 N-linked (GlcNAc...) asparagine glycosylation sites follow: Asn-155, Asn-321, and Asn-376. Collagen-like domains follow at residues 487–542, 552–611, 660–719, 741–797, 798–857, 858–887, 888–947, 948–1007, 1011–1052, 1053–1112, 1116–1170, 1172–1196, 1201–1249, 1252–1306, 1309–1353, 1354–1413, and 1420–1479; these read LRGP…PGFS, GDQG…EGNP, GPAG…KGEQ, GPPG…RGPP, GPPG…TGPV, GLPGEVGMTGSIGEKGERGSPGPLGPQGEK, GVMG…KGEK, GDQG…PGEM, GPPG…PGAP, GEEG…PGQR, GKKG…GIPG, RGHQGQPGPSGLPGPKGEKGYPGED, GPPG…GEPG, GEQG…GNPG, GPPG…QGPK, GEQG…EGDA, and GPKG…PGPR. Positions 487 to 1481 are disordered; the sequence is LRGPKGDTGP…PPGAPGPRKQ (995 aa). The span at 496–505 shows a compositional bias: pro residues; it reads PPGPPGPAGI. 2 stretches are compositionally biased toward low complexity: residues 574–587 and 685–701; these read HPGLPGLPGEQGIP and SVGPVGPIGPAGIPGPM. Residues 893–902 are compositionally biased toward pro residues; that stretch reads PGPPGVPGPI. A compositionally biased stretch (low complexity) spans 985-1019; that stretch reads DRGLPGEPGLRGLQGDVGPPGEMGMEGPPGTEGES. Gly residues-rich tracts occupy residues 1035–1044 and 1065–1074; these read GSVGGTGEPG and GVPGGRGLPG. 2 stretches are compositionally biased toward low complexity: residues 1132–1145 and 1174–1186; these read SRGPPGKIGKSGPK and HQGQPGPSGLPGP. Basic and acidic residues predominate over residues 1256–1266; sequence LKGERGSEGNK. Over residues 1271 to 1293 the composition is skewed to low complexity; it reads APGPSGKPGIPGLQGLLGPKGIQ. A compositionally biased stretch (gly residues) spans 1318–1327; that stretch reads GIRGGPGRTG. The span at 1466-1476 shows a compositional bias: pro residues; that stretch reads QPGPPGPPGAP. One can recognise a Fibrillar collagen NC1 domain in the interval 1515–1714; sequence EEIFKTLNYL…YIDSSSVCFL (200 aa).

Belongs to the fibrillar collagen family.

It localises to the secreted. It is found in the extracellular space. The protein resides in the extracellular matrix. Its function is as follows. May participate in regulating type I collagen fibrillogenesis at specific anatomical locations during fetal development. The chain is Collagen alpha-1(XXIV) chain (COL24A1) from Homo sapiens (Human).